Consider the following 1390-residue polypeptide: DNA-directed RNA polymerase subunit beta' (1390 aa).

Residues Cys-73, Cys-75, Cys-88, and Cys-91 each contribute to the Zn(2+) site. Residues Asp-464, Asp-466, and Asp-468 each contribute to the Mg(2+) site. Zn(2+)-binding residues include Cys-810, Cys-884, Cys-891, and Cys-894. A disordered region spans residues 1365-1390 (EKKEQKIYGNGEEPAKEQKWIPQAGT).

The protein belongs to the RNA polymerase beta' chain family. As to quaternary structure, the RNAP catalytic core consists of 2 alpha, 1 beta, 1 beta' and 1 omega subunit. When a sigma factor is associated with the core the holoenzyme is formed, which can initiate transcription. Mg(2+) serves as cofactor. It depends on Zn(2+) as a cofactor.

It carries out the reaction RNA(n) + a ribonucleoside 5'-triphosphate = RNA(n+1) + diphosphate. Its function is as follows. DNA-dependent RNA polymerase catalyzes the transcription of DNA into RNA using the four ribonucleoside triphosphates as substrates. The polypeptide is DNA-directed RNA polymerase subunit beta' (Methylacidiphilum infernorum (isolate V4) (Methylokorus infernorum (strain V4))).